The sequence spans 420 residues: MLPGLRRLLQGPASACLLLTLLALPPVTPSCPMLCTCYSSPPTVSCQANNFSSVPLSLPPSTQRLFLQNNLIRSLRPGTFGPNLLTLWLFSNNLSTIYPGTFRHLQALEELDLGDNRHLRSLEPDTFQGLERLQSLHLYRCQLSSLPGNIFRGLVSLQYLYLQENSLLHLQDDLFADLANLSHLFLHGNRLRLLTEHVFRGLGSLDRLLLHGNRLQGVHRAAFHGLSRLTILYLFNNSLASLPGEALADLPALEFLRLNANPWACDCRARPLWAWFQRARVSSSDVTCATPPERQGRDLRTLRDTDFQACPPPTPTRPGSRARGNSSSNHLYGVAEAGAPPADPSTLYRDLPAEDSRGRQGGDAPTEDDYWGGYGGEDQRGEQTCPGAACQAPADSRGPVLSAGLRTPLLCLLLLAPHHL.

The N-terminal stretch at 1–30 (MLPGLRRLLQGPASACLLLTLLALPPVTPS) is a signal peptide. 2 disulfides stabilise this stretch: Cys-31/Cys-37 and Cys-35/Cys-46. The region spanning 31 to 60 (CPMLCTCYSSPPTVSCQANNFSSVPLSLPP) is the LRRNT domain. The N-linked (GlcNAc...) asparagine glycan is linked to Asn-50. 8 LRR repeats span residues 61–82 (STQR…TFGP), 83–104 (NLLT…TFRH), 107–129 (ALEE…TFQG), 132–153 (RLQS…IFRG), 156–177 (SLQY…LFAD), 180–201 (NLSH…VFRG), 204–225 (SLDR…AFHG), and 228–249 (RLTI…ALAD). N-linked (GlcNAc...) asparagine glycosylation is present at Asn-93. Asn-236 carries an N-linked (GlcNAc...) asparagine glycan. In terms of domain architecture, LRRCT spans 261–312 (NPWACDCRARPLWAWFQRARVSSSDVTCATPPERQGRDLRTLRDTDFQACPP). Intrachain disulfides connect Cys-265-Cys-288 and Cys-267-Cys-310. The disordered stretch occupies residues 286-390 (VTCATPPERQ…GEQTCPGAAC (105 aa)). Positions 294 to 306 (RQGRDLRTLRDTD) are enriched in basic and acidic residues. Residues 315–327 (PTRPGSRARGNSS) form an important for interaction with MAG region. The span at 351 to 360 (LPAEDSRGRQ) shows a compositional bias: basic and acidic residues. Cys-390 is lipidated: GPI-anchor amidated cysteine. Residues 391–420 (QAPADSRGPVLSAGLRTPLLCLLLLAPHHL) constitute a propeptide, removed in mature form.

It belongs to the Nogo receptor family. Interaction with MAG is controversial, and may be indirect. Interacts with MAG. Does not interact with OMG and RTN4. In terms of processing, undergoes zinc metalloproteinase-mediated ectodomain shedding in neuroblastoma cells; is released both as a full-length ectodomain and an N-terminal fragment containing the leucine-rich repeat (LRR) region of the protein. Post-translationally, N-glycosylated. O-glycosylated. Contains terminal sialic acid groups on its glycan chains. Detected in adult brain, in neocortex, hippocampus, striatum and dorsal root ganglion neurons, and in retina (at protein level). In brain, detected in cerebral cortex and hippocampus. Weak or no expression detected in the cerebellum, thalamus or striatum.

Its subcellular location is the cell membrane. It localises to the cell projection. It is found in the dendrite. The protein resides in the perikaryon. The protein localises to the axon. Its subcellular location is the membrane raft. In terms of biological role, cell surface receptor that plays a functionally redundant role in the inhibition of neurite outgrowth mediated by MAG. Plays a functionally redundant role in postnatal brain development. Contributes to normal axon migration across the brain midline and normal formation of the corpus callosum. Does not seem to play a significant role in regulating axon regeneration in the adult central nervous system. Protects motoneurons against apoptosis; protection against apoptosis is probably mediated by MAG. Like other family members, plays a role in restricting the number dendritic spines and the number of synapses that are formed during brain development. Signaling mediates activation of Rho and downstream reorganization of the actin cytoskeleton. In Rattus norvegicus (Rat), this protein is Reticulon-4 receptor-like 2.